Consider the following 228-residue polypeptide: tRNA (guanine-N(1)-)-methyltransferase (228 aa).

S-adenosyl-L-methionine-binding positions include G111 and 130–135; that span reads IGDFVL.

This sequence belongs to the RNA methyltransferase TrmD family. Homodimer.

It localises to the cytoplasm. It carries out the reaction guanosine(37) in tRNA + S-adenosyl-L-methionine = N(1)-methylguanosine(37) in tRNA + S-adenosyl-L-homocysteine + H(+). Functionally, specifically methylates guanosine-37 in various tRNAs. This is tRNA (guanine-N(1)-)-methyltransferase from Ureaplasma urealyticum serovar 10 (strain ATCC 33699 / Western).